A 130-amino-acid chain; its full sequence is Small ribosomal subunit protein uS11c (130 aa).

This sequence belongs to the universal ribosomal protein uS11 family. In terms of assembly, part of the 30S ribosomal subunit.

Its subcellular location is the plastid. It is found in the chloroplast. The chain is Small ribosomal subunit protein uS11c from Adiantum capillus-veneris (Maidenhair fern).